Here is a 233-residue protein sequence, read N- to C-terminus: Homeobox protein Hox-B6b (233 aa).

The Antp-type hexapeptide motif lies at 136–141 (IYPWMQ). The segment at residues 155–214 (GRRGRQTYTRYQTLELEKEFHFNRYLTRRRRIEISHALCLTERQIKIWFQNRRMKWKKEN) is a DNA-binding region (homeobox). The segment at 213 to 233 (ENKLLNPSKTPEEEEEAEKKS) is disordered. The span at 224-233 (EEEEEAEKKS) shows a compositional bias: acidic residues.

It belongs to the Antp homeobox family.

Its subcellular location is the nucleus. Sequence-specific transcription factor which is part of a developmental regulatory system that provides cells with specific positional identities on the anterior-posterior axis. This Takifugu rubripes (Japanese pufferfish) protein is Homeobox protein Hox-B6b (hoxb6b).